A 389-amino-acid chain; its full sequence is Chalcone synthase H2 (389 aa).

The active site involves C164.

It belongs to the thiolase-like superfamily. Chalcone/stilbene synthases family.

It is found in the cytoplasm. The catalysed reaction is (E)-4-coumaroyl-CoA + 3 malonyl-CoA + 3 H(+) = 2',4,4',6'-tetrahydroxychalcone + 3 CO2 + 4 CoA. The protein operates within secondary metabolite biosynthesis; flavonoid biosynthesis. In terms of biological role, involved in the biosynthesis of prenylated phenolics natural products which contribute to the bitter taste of beer and display broad biological activities. Chalcone synthase that can use 4-coumaroyl-CoA to produce 4,2',4',6'-tetrahydroxychalcone (also termed naringenin-chalcone or chalcone) which can, under specific conditions, spontaneously isomerize into naringenin. The protein is Chalcone synthase H2 of Humulus lupulus (European hop).